Reading from the N-terminus, the 755-residue chain is Photosystem I P700 chlorophyll a apoprotein A1 (755 aa).

A run of 8 helical transmembrane segments spans residues 72 to 95 (IFSA…FHGA), 158 to 181 (LYCT…FHYH), 197 to 221 (LNHH…HVSL), 297 to 315 (TAHH…GHMY), 352 to 375 (WHAQ…QHMY), 391 to 417 (LSLF…IFMV), 439 to 461 (AIIS…LYVH), and 536 to 554 (FMVH…LILL). [4Fe-4S] cluster is bound by residues Cys-578 and Cys-587. The next 2 membrane-spanning stretches (helical) occupy residues 594 to 615 (HVFL…HFSW) and 669 to 691 (LSAY…MFLF). His-680 lines the chlorophyll a' pocket. Residues Met-688 and Tyr-696 each coordinate chlorophyll a. Position 697 (Trp-697) interacts with phylloquinone. A helical membrane pass occupies residues 729 to 749 (AVGVAHYLLGGIATTWAFFLA).

It belongs to the PsaA/PsaB family. As to quaternary structure, the PsaA/B heterodimer binds the P700 chlorophyll special pair and subsequent electron acceptors. PSI consists of a core antenna complex that captures photons, and an electron transfer chain that converts photonic excitation into a charge separation. The cyanobacterial PSI reaction center is composed of one copy each of PsaA,B,C,D,E,F,I,J,K,L,M and X, and forms trimeric complexes. Requires PSI electron transfer chain: 5 chlorophyll a, 1 chlorophyll a', 2 phylloquinones and 3 4Fe-4S clusters. PSI core antenna: 90 chlorophyll a, 22 carotenoids, 3 phospholipids and 1 galactolipid. P700 is a chlorophyll a/chlorophyll a' dimer, A0 is one or more chlorophyll a, A1 is one or both phylloquinones and FX is a shared 4Fe-4S iron-sulfur center. as cofactor.

It is found in the cellular thylakoid membrane. It catalyses the reaction reduced [plastocyanin] + hnu + oxidized [2Fe-2S]-[ferredoxin] = oxidized [plastocyanin] + reduced [2Fe-2S]-[ferredoxin]. In terms of biological role, psaA and PsaB bind P700, the primary electron donor of photosystem I (PSI), as well as the electron acceptors A0, A1 and FX. PSI is a plastocyanin/cytochrome c6-ferredoxin oxidoreductase, converting photonic excitation into a charge separation, which transfers an electron from the donor P700 chlorophyll pair to the spectroscopically characterized acceptors A0, A1, FX, FA and FB in turn. Oxidized P700 is reduced on the lumenal side of the thylakoid membrane by plastocyanin or cytochrome c6. This is Photosystem I P700 chlorophyll a apoprotein A1 from Thermostichus vulcanus (Synechococcus vulcanus).